The following is a 320-amino-acid chain: Pseudouridine-5'-phosphate glycosidase (320 aa).

Residue glutamate 25 is the Proton donor of the active site. Residues lysine 85 and valine 105 each coordinate substrate. Aspartate 137 contributes to the Mn(2+) binding site. 139–141 (SAD) serves as a coordination point for substrate. The Nucleophile role is filled by lysine 158.

Belongs to the pseudouridine-5'-phosphate glycosidase family. Homotrimer. Requires Mn(2+) as cofactor.

The enzyme catalyses D-ribose 5-phosphate + uracil = psi-UMP + H2O. In terms of biological role, catalyzes the reversible cleavage of pseudouridine 5'-phosphate (PsiMP) to ribose 5-phosphate and uracil. Functions biologically in the cleavage direction, as part of a pseudouridine degradation pathway. This Rhodospirillum centenum (strain ATCC 51521 / SW) protein is Pseudouridine-5'-phosphate glycosidase.